A 386-amino-acid chain; its full sequence is Ribonuclease D (386 aa).

In terms of domain architecture, 3'-5' exonuclease spans 3–174; sequence HTITTTDELA…EIYEYLSAEL (172 aa). Residues 213 to 294 form the HRDC domain; that stretch reads SGRVVAIAQQ…ARGMSVPNSE (82 aa).

The protein belongs to the RNase D family. It depends on a divalent metal cation as a cofactor.

It localises to the cytoplasm. The catalysed reaction is Exonucleolytic cleavage that removes extra residues from the 3'-terminus of tRNA to produce 5'-mononucleotides.. Its function is as follows. Exonuclease involved in the 3' processing of various precursor tRNAs. Initiates hydrolysis at the 3'-terminus of an RNA molecule and releases 5'-mononucleotides. The polypeptide is Ribonuclease D (Jannaschia sp. (strain CCS1)).